A 287-amino-acid polypeptide reads, in one-letter code: 4-diphosphocytidyl-2-C-methyl-D-erythritol kinase (287 aa).

K22 is an active-site residue. 102–112 (PAAAGIGGGSS) serves as a coordination point for ATP. D139 is an active-site residue.

Belongs to the GHMP kinase family. IspE subfamily.

The catalysed reaction is 4-CDP-2-C-methyl-D-erythritol + ATP = 4-CDP-2-C-methyl-D-erythritol 2-phosphate + ADP + H(+). The protein operates within isoprenoid biosynthesis; isopentenyl diphosphate biosynthesis via DXP pathway; isopentenyl diphosphate from 1-deoxy-D-xylulose 5-phosphate: step 3/6. Catalyzes the phosphorylation of the position 2 hydroxy group of 4-diphosphocytidyl-2C-methyl-D-erythritol. This Dinoroseobacter shibae (strain DSM 16493 / NCIMB 14021 / DFL 12) protein is 4-diphosphocytidyl-2-C-methyl-D-erythritol kinase.